The chain runs to 152 residues: Deoxyuridine 5'-triphosphate nucleotidohydrolase (152 aa).

Residues 71–73 (RSG), Asn84, 88–90 (LID), and Met98 each bind substrate.

It belongs to the dUTPase family. Mg(2+) is required as a cofactor.

It carries out the reaction dUTP + H2O = dUMP + diphosphate + H(+). It functions in the pathway pyrimidine metabolism; dUMP biosynthesis; dUMP from dCTP (dUTP route): step 2/2. Its function is as follows. This enzyme is involved in nucleotide metabolism: it produces dUMP, the immediate precursor of thymidine nucleotides and it decreases the intracellular concentration of dUTP so that uracil cannot be incorporated into DNA. The sequence is that of Deoxyuridine 5'-triphosphate nucleotidohydrolase from Shewanella halifaxensis (strain HAW-EB4).